The chain runs to 240 residues: U1 small nuclear ribonucleoprotein C (240 aa).

The segment at 4–36 (YYCEYCDIYLTHSSPVGRRQHIQGRKHISAKIE) adopts a Matrin-type zinc-finger fold. Disordered stretches follow at residues 86–122 (GMKHHSHYSRHSHRHHMSHGRYNRERHGHHSYSSKYH) and 175–240 (IDSD…SVDA). 2 stretches are compositionally biased toward basic and acidic residues: residues 178 to 194 (DPVKDSQNGERVGDNAI) and 203 to 219 (DQGDRGDLGDHADHADH). The span at 226–240 (TDGTANGNDQVSVDA) shows a compositional bias: polar residues.

The protein belongs to the U1 small nuclear ribonucleoprotein C family. As to quaternary structure, U1 snRNP is composed of the 7 core Sm proteins B/B', D1, D2, D3, E, F and G that assemble in a heptameric protein ring on the Sm site of the small nuclear RNA to form the core snRNP, and at least 3 U1 snRNP-specific proteins U1-70K, U1-A and U1-C. U1-C interacts with U1 snRNA and the 5' splice-site region of the pre-mRNA.

It is found in the nucleus. In terms of biological role, component of the spliceosomal U1 snRNP, which is essential for recognition of the pre-mRNA 5' splice-site and the subsequent assembly of the spliceosome. U1-C is directly involved in initial 5' splice-site recognition for both constitutive and regulated alternative splicing. The interaction with the 5' splice-site seems to precede base-pairing between the pre-mRNA and the U1 snRNA. Stimulates commitment or early (E) complex formation by stabilizing the base pairing of the 5' end of the U1 snRNA and the 5' splice-site region. This is U1 small nuclear ribonucleoprotein C from Plasmodium vivax (strain Salvador I).